The sequence spans 100 residues: ATP phosphoribosyltransferase (100 aa).

It belongs to the ATP phosphoribosyltransferase family. Long subfamily. Equilibrium between an active dimeric form, an inactive hexameric form and higher aggregates. Interconversion between the various forms is largely reversible and is influenced by the natural substrates and inhibitors of the enzyme. Mg(2+) is required as a cofactor.

Its subcellular location is the cytoplasm. The enzyme catalyses 1-(5-phospho-beta-D-ribosyl)-ATP + diphosphate = 5-phospho-alpha-D-ribose 1-diphosphate + ATP. It participates in amino-acid biosynthesis; L-histidine biosynthesis; L-histidine from 5-phospho-alpha-D-ribose 1-diphosphate: step 1/9. Feedback inhibited by histidine. Catalyzes the condensation of ATP and 5-phosphoribose 1-diphosphate to form N'-(5'-phosphoribosyl)-ATP (PR-ATP). Has a crucial role in the pathway because the rate of histidine biosynthesis seems to be controlled primarily by regulation of HisG enzymatic activity. The polypeptide is ATP phosphoribosyltransferase (hisG) (Klebsiella pneumoniae).